The sequence spans 23 residues: Basic phospholipase A2 mangshantoxin (23 aa).

This sequence belongs to the phospholipase A2 family. Group II subfamily. It depends on Ca(2+) as a cofactor. In terms of processing, contains 7 disulfide bonds. As to expression, expressed by the venom gland.

Its subcellular location is the secreted. It catalyses the reaction a 1,2-diacyl-sn-glycero-3-phosphocholine + H2O = a 1-acyl-sn-glycero-3-phosphocholine + a fatty acid + H(+). Functionally, snake venom phospholipase A2 (PLA2) that displays presynaptic neurotoxicity. PLA2 catalyzes the calcium-dependent hydrolysis of the 2-acyl groups in 3-sn-phosphoglycerides. The sequence is that of Basic phospholipase A2 mangshantoxin from Protobothrops mangshanensis (Mangshan pitviper).